Reading from the N-terminus, the 627-residue chain is Protein EXECUTER 2, chloroplastic (627 aa).

3 disordered regions span residues 1–34, 212–277, and 308–359; these read MSAA…PSAA, PTKG…AKDS, and EAEL…SKSP. Residues 1–45 constitute a chloroplast transit peptide; that stretch reads MSAATACASPAAARPPLHIPLRSPPSAAHLPSAAASRRASSAACR. Over residues 217–229 the composition is skewed to low complexity; it reads SSASSVSSATAES. Composition is skewed to acidic residues over residues 308–321 and 331–353; these read EAEL…ELVQ and SLED…SDSA.

It localises to the plastid. The protein resides in the chloroplast. Together with EX1, enables higher plants to perceive singlet oxygen as a stress signal in plastid that activates a genetically determined nuclear stress response program which triggers a programmed cell death (PCD). This transfer of singlet oxygen-induced stress-related signals from the plastid to the nucleus that triggers genetically controlled PCD pathway is unique to photosynthetic eukaryotes and operates under mild stress conditions, impeding photosystem II (PSII) without causing photooxidative damage of the plant. This Oryza sativa subsp. japonica (Rice) protein is Protein EXECUTER 2, chloroplastic.